A 373-amino-acid polypeptide reads, in one-letter code: Ca(2+)/H(+) antiporter (373 aa).

11 helical membrane passes run 6–26 (TIFF…WLHW), 29–49 (VSIF…MGEA), 61–81 (LGGL…AFIA), 94–114 (ITGS…LLGG), 134–154 (MNLA…SNGI), 162–182 (LSVA…LFSM), 220–240 (FWLG…ELLV), 249–269 (SLGL…GNAA), 291–311 (VGST…AGWI), 318–338 (LDFN…ANSI), and 349–369 (GSLL…HPVV).

This sequence belongs to the Ca(2+):cation antiporter (CaCA) (TC 2.A.19) family. Cation/proton exchanger (CAX) subfamily.

It is found in the cell inner membrane. Its function is as follows. Ca(+)/H(+) antiporter that extrudes calcium in exchange for external protons. Plays an important role in salt tolerance. Does not transport sodium or lithium. In Aphanothece halophytica, this protein is Ca(2+)/H(+) antiporter.